Here is a 757-residue protein sequence, read N- to C-terminus: RNA-directed RNA polymerase catalytic subunit (757 aa).

A disordered region spans residues 50 to 82; the sequence is SEKGKWTTNTETGAPQLNPIDGPLPEDNEPSGY. A compositionally biased stretch (polar residues) spans 55 to 64; that stretch reads WTTNTETGAP. Short sequence motifs (nuclear localization signal) lie at residues 187 to 195 and 203 to 216; these read RKRRVRDNM and RTIG…NKRS. A promoter-binding site region spans residues 249–256; sequence RGFVYFVE. One can recognise a RdRp catalytic domain in the interval 286 to 483; it reads VRKMMTNSQD…GINMSKKKSY (198 aa).

Belongs to the influenza viruses polymerase PB1 family. As to quaternary structure, influenza RNA polymerase is composed of three subunits: PB1, PB2 and PA. Interacts (via N-terminus) with PA (via C-terminus). Interacts (via C-terminus) with PB2 (via N-terminus); this interaction is essential for transcription initiation. Post-translationally, phosphorylated by host PRKCA.

It localises to the host nucleus. Its subcellular location is the host cytoplasm. The catalysed reaction is RNA(n) + a ribonucleoside 5'-triphosphate = RNA(n+1) + diphosphate. Its function is as follows. RNA-dependent RNA polymerase which is responsible for replication and transcription of virus RNA segments. The transcription of viral mRNAs occurs by a unique mechanism called cap-snatching. 5' methylated caps of cellular mRNAs are cleaved after 10-13 nucleotides by PA. In turn, these short capped RNAs are used as primers by PB1 for transcription of viral mRNAs. During virus replication, PB1 initiates RNA synthesis and copy vRNA into complementary RNA (cRNA) which in turn serves as a template for the production of more vRNAs. The protein is RNA-directed RNA polymerase catalytic subunit of Influenza A virus (strain A/Turkey/Minnesota/501/1978 H6N8).